The sequence spans 66 residues: Large ribosomal subunit protein uL29 (66 aa).

It belongs to the universal ribosomal protein uL29 family.

This Lysinibacillus sphaericus (strain C3-41) protein is Large ribosomal subunit protein uL29.